Consider the following 599-residue polypeptide: MNYKRNFSIIAHIDHGKSTLSDRIIQLCGGLTEREMASQVLDSMDLERERGITIKAQSVTLYYQAQDGNTYQLNFIDTPGHVDFSYEVSRSLAACEGALLVVDAAQGVEAQTLANCYTALEMNLEVVPVLNKIDLPASDPDRIAEEIEDIVGIDATDAVRCSAKTGIGIADVLERLVRDIPAPKGDPKGTLQALIIDSWFDNYLGVVSLIRLKNGTLRKGDKVKVMSTGQIYNVERLGIFTPKRFDTDILNCGEVGWLVCAIKDILGAPVGDTLTLSRHPAEKPLPGFKKVKPQVYAGLFPISSDDYESFRDALAKLSLNDASLFFEPENSGALGFGFRCGFLGLLHMEIVQERLEREYHLDLITTAPTVVYEVKTVKKEILYVDSPSKLPALSEIEELREPIAECHILLPQEYLGNVMTLCVAKRGVQVNMVYHGHQVALTYHIPMAEVVLDFFDRLKSTSRGYASLDYNFKRFQASDMVRVDILLNTERVDALALITHRDNAASRGRELVEKMKDFIPRQQFDIAIQAAIGHHIIARATVKQLRKNVLAKCYGGDVSRKKKLLQKQKEGKKRMKRVGNVELPQDAFLAILHIGKESK.

The tr-type G domain occupies 2-184; that stretch reads NYKRNFSIIA…RLVRDIPAPK (183 aa). GTP is bound by residues 14–19 and 131–134; these read DHGKST and NKID.

The protein belongs to the TRAFAC class translation factor GTPase superfamily. Classic translation factor GTPase family. LepA subfamily.

It is found in the cell membrane. The enzyme catalyses GTP + H2O = GDP + phosphate + H(+). In terms of biological role, required for accurate and efficient protein synthesis under certain stress conditions. May act as a fidelity factor of the translation reaction, by catalyzing a one-codon backward translocation of tRNAs on improperly translocated ribosomes. Back-translocation proceeds from a post-translocation (POST) complex to a pre-translocation (PRE) complex, thus giving elongation factor G a second chance to translocate the tRNAs correctly. Binds to ribosomes in a GTP-dependent manner. In Hamiltonella defensa subsp. Acyrthosiphon pisum (strain 5AT), this protein is Elongation factor 4.